The primary structure comprises 100 residues: UPF0213 protein YhbQ (100 aa).

A GIY-YIG domain is found at 2-77 (TPWYLYLIRT…KQLTKRQKER (76 aa)).

It belongs to the UPF0213 family.

The chain is UPF0213 protein YhbQ from Escherichia coli O8 (strain IAI1).